The chain runs to 493 residues: UDP-N-acetylmuramoyl-L-alanyl-D-glutamate--2,6-diaminopimelate ligase (493 aa).

Ser-30 lines the UDP-N-acetyl-alpha-D-muramoyl-L-alanyl-D-glutamate pocket. Gly-114–Ser-120 is an ATP binding site. UDP-N-acetyl-alpha-D-muramoyl-L-alanyl-D-glutamate-binding positions include Thr-156–Thr-157, Ser-183, Gln-189, and Arg-191. Lys-223 carries the post-translational modification N6-carboxylysine. Residues Arg-386, Asp-410–Arg-413, Gly-460, and Glu-464 each bind meso-2,6-diaminopimelate. Residues Asp-410–Arg-413 carry the Meso-diaminopimelate recognition motif motif.

It belongs to the MurCDEF family. MurE subfamily. Mg(2+) serves as cofactor. Carboxylation is probably crucial for Mg(2+) binding and, consequently, for the gamma-phosphate positioning of ATP.

It localises to the cytoplasm. The catalysed reaction is UDP-N-acetyl-alpha-D-muramoyl-L-alanyl-D-glutamate + meso-2,6-diaminopimelate + ATP = UDP-N-acetyl-alpha-D-muramoyl-L-alanyl-gamma-D-glutamyl-meso-2,6-diaminopimelate + ADP + phosphate + H(+). It participates in cell wall biogenesis; peptidoglycan biosynthesis. Functionally, catalyzes the addition of meso-diaminopimelic acid to the nucleotide precursor UDP-N-acetylmuramoyl-L-alanyl-D-glutamate (UMAG) in the biosynthesis of bacterial cell-wall peptidoglycan. The chain is UDP-N-acetylmuramoyl-L-alanyl-D-glutamate--2,6-diaminopimelate ligase from Chromobacterium violaceum (strain ATCC 12472 / DSM 30191 / JCM 1249 / CCUG 213 / NBRC 12614 / NCIMB 9131 / NCTC 9757 / MK).